The sequence spans 492 residues: Putative transporter SVOPL (492 aa).

10 consecutive transmembrane segments (helical) span residues 48-68 (IALF…IMLI), 86-106 (VALV…LFGL), 121-141 (FLWG…IWFV), 179-199 (VFWL…IPTI), 203-223 (WLIR…KFIP), 281-301 (TLQI…VILA), 348-368 (IIST…INFL), 383-403 (LFFL…FLFM), 429-449 (ALGM…APFI), and 458-478 (ILGA…SAFT).

The protein belongs to the major facilitator superfamily.

The protein localises to the membrane. This chain is Putative transporter SVOPL (SVOPL), found in Homo sapiens (Human).